Reading from the N-terminus, the 60-residue chain is Cytotoxin 1 (60 aa).

4 disulfides stabilise this stretch: C3/C21, C14/C38, C42/C53, and C54/C59.

This sequence belongs to the three-finger toxin family. Short-chain subfamily. Type IA cytotoxin sub-subfamily. In terms of assembly, monomer in solution; Homodimer and oligomer in the presence of negatively charged lipids forming a pore with a size ranging between 20 and 30 Angstroms. As to expression, expressed by the venom gland.

It localises to the secreted. Its subcellular location is the target cell membrane. Its function is as follows. Shows cytolytic activity on many different cells by forming pore in lipid membranes. In vivo, increases heart rate or kills the animal by cardiac arrest. In addition, it binds to heparin with high affinity, interacts with Kv channel-interacting protein 1 (KCNIP1) in a calcium-independent manner, and binds to integrin alpha-V/beta-3 (ITGAV/ITGB3) with moderate affinity. This is Cytotoxin 1 from Naja nivea (Cape cobra).